Reading from the N-terminus, the 356-residue chain is Histidinol-phosphate aminotransferase 1 (356 aa).

Lys213 is modified (N6-(pyridoxal phosphate)lysine).

The protein belongs to the class-II pyridoxal-phosphate-dependent aminotransferase family. Histidinol-phosphate aminotransferase subfamily. Homodimer. It depends on pyridoxal 5'-phosphate as a cofactor.

The enzyme catalyses L-histidinol phosphate + 2-oxoglutarate = 3-(imidazol-4-yl)-2-oxopropyl phosphate + L-glutamate. It participates in amino-acid biosynthesis; L-histidine biosynthesis; L-histidine from 5-phospho-alpha-D-ribose 1-diphosphate: step 7/9. The protein is Histidinol-phosphate aminotransferase 1 of Burkholderia pseudomallei (strain K96243).